The sequence spans 257 residues: Taurine import ATP-binding protein TauB (257 aa).

An ABC transporter domain is found at 6–233 (LDKISIHYDG…RYAAGEPIRA (228 aa)). 38-45 (GRSGCGKT) lines the ATP pocket.

This sequence belongs to the ABC transporter superfamily. Taurine importer (TC 3.A.1.17.1) family. The complex is composed of two ATP-binding proteins (TauB), two transmembrane proteins (TauC) and a solute-binding protein (TauA).

It is found in the cell inner membrane. It carries out the reaction taurine(out) + ATP + H2O = taurine(in) + ADP + phosphate + H(+). In terms of biological role, part of the ABC transporter complex TauABC involved in taurine import. Responsible for energy coupling to the transport system. The chain is Taurine import ATP-binding protein TauB from Mesorhizobium japonicum (strain LMG 29417 / CECT 9101 / MAFF 303099) (Mesorhizobium loti (strain MAFF 303099)).